The following is a 603-amino-acid chain: Elongation factor 4 (603 aa).

In terms of domain architecture, tr-type G spans 7–189 (SRIRNFSIIA…AIVQQVPPPA (183 aa)). Residues 19 to 24 (DHGKST) and 136 to 139 (NKID) each bind GTP.

It belongs to the TRAFAC class translation factor GTPase superfamily. Classic translation factor GTPase family. LepA subfamily.

Its subcellular location is the cell inner membrane. The catalysed reaction is GTP + H2O = GDP + phosphate + H(+). Functionally, required for accurate and efficient protein synthesis under certain stress conditions. May act as a fidelity factor of the translation reaction, by catalyzing a one-codon backward translocation of tRNAs on improperly translocated ribosomes. Back-translocation proceeds from a post-translocation (POST) complex to a pre-translocation (PRE) complex, thus giving elongation factor G a second chance to translocate the tRNAs correctly. Binds to ribosomes in a GTP-dependent manner. The polypeptide is Elongation factor 4 (Synechocystis sp. (strain ATCC 27184 / PCC 6803 / Kazusa)).